The primary structure comprises 382 residues: Pyrimidine monooxygenase RutA (382 aa).

Residues 68 to 69 (IK), N134, E143, 159 to 160 (RY), and S209 each bind FMN.

The protein belongs to the NtaA/SnaA/DszA monooxygenase family. RutA subfamily.

It carries out the reaction uracil + FMNH2 + NADH + O2 = (Z)-3-ureidoacrylate + FMN + NAD(+) + H2O + H(+). It catalyses the reaction thymine + FMNH2 + NADH + O2 = (Z)-2-methylureidoacrylate + FMN + NAD(+) + H2O + H(+). Its function is as follows. Catalyzes the pyrimidine ring opening between N-3 and C-4 by an unusual flavin hydroperoxide-catalyzed mechanism, adding oxygen atoms in the process to yield ureidoacrylate peracid, that immediately reacts with FMN forming ureidoacrylate and FMN-N(5)-oxide. The FMN-N(5)-oxide reacts spontaneously with NADH to produce FMN. Requires the flavin reductase RutF to regenerate FMN in vivo. This is Pyrimidine monooxygenase RutA from Shigella flexneri serotype X (strain 2002017).